The chain runs to 128 residues: Protein SOB FIVE-LIKE 3 (128 aa).

Disordered regions lie at residues 1-26 (MEREECSSSESGWTTYISSRMEEEEE) and 54-128 (KDSD…HKKK). Polar residues predominate over residues 8–18 (SSESGWTTYIS). Residues 11–16 (SGWTTY) carry the SOFL-A motif. An SOFL-B motif is present at residues 59-68 (SMASDASSGP). Residues 80 to 104 (REGLALRNGKGESNDVYSHRIDDKN) show a composition bias toward basic and acidic residues. A Nuclear localization signal motif is present at residues 111-118 (RKKEKKKS).

Belongs to the SOFL plant protein family. Expressed in seedlings, roots, flowers and siliques.

Its subcellular location is the cytoplasm. It localises to the nucleus. Its function is as follows. Involved in cytokinin-mediated development. The polypeptide is Protein SOB FIVE-LIKE 3 (Arabidopsis thaliana (Mouse-ear cress)).